A 195-amino-acid polypeptide reads, in one-letter code: Ephrin-A2 (195 aa).

The N-terminal stretch at 1-16 (MELSLVVFTVVCWVSV) is a signal peptide. Residues 24–157 (SDRHAVYWNS…KLKVYVKPTS (134 aa)) form the Ephrin RBD domain. Asn-32 is a glycosylation site (N-linked (GlcNAc...) asparagine). 2 disulfides stabilise this stretch: Cys-57–Cys-97 and Cys-85–Cys-146. Residue Cys-174 is the site of GPI-anchor amidated cysteine attachment. Residues 175 to 195 (GADGPCLAVLMLLLVFLLAGV) constitute a propeptide, removed in mature form.

Belongs to the ephrin family. As to quaternary structure, binds to the receptor tyrosine kinases epha2, epha3, epha4 and epha5. Interacts with epha8; activates epha8. As to expression, widespread expression in the embryo.

It localises to the cell membrane. Functionally, cell surface GPI-bound ligand for Eph receptors, a family of receptor tyrosine kinases which are crucial for migration, repulsion and adhesion during neuronal, vascular and epithelial development. Binds promiscuously Eph receptors residing on adjacent cells, leading to contact-dependent bidirectional signaling into neighboring cells. The signaling pathway downstream of the receptor is referred to as forward signaling while the signaling pathway downstream of the ephrin ligand is referred to as reverse signaling. With the epha2 receptor may play a role in bone remodeling through regulation of osteoclastogenesis and osteoblastogenesis. The protein is Ephrin-A2 (efna2) of Danio rerio (Zebrafish).